We begin with the raw amino-acid sequence, 259 residues long: Acetylglutamate kinase (259 aa).

Substrate is bound by residues 45 to 46 (GG), R67, and N159.

This sequence belongs to the acetylglutamate kinase family. ArgB subfamily.

It localises to the cytoplasm. The enzyme catalyses N-acetyl-L-glutamate + ATP = N-acetyl-L-glutamyl 5-phosphate + ADP. Its pathway is amino-acid biosynthesis; L-arginine biosynthesis; N(2)-acetyl-L-ornithine from L-glutamate: step 2/4. Catalyzes the ATP-dependent phosphorylation of N-acetyl-L-glutamate. The chain is Acetylglutamate kinase from Aeromonas hydrophila subsp. hydrophila (strain ATCC 7966 / DSM 30187 / BCRC 13018 / CCUG 14551 / JCM 1027 / KCTC 2358 / NCIMB 9240 / NCTC 8049).